Consider the following 175-residue polypeptide: Adenine phosphoribosyltransferase (175 aa).

This sequence belongs to the purine/pyrimidine phosphoribosyltransferase family. In terms of assembly, homodimer.

The protein resides in the cytoplasm. It carries out the reaction AMP + diphosphate = 5-phospho-alpha-D-ribose 1-diphosphate + adenine. It functions in the pathway purine metabolism; AMP biosynthesis via salvage pathway; AMP from adenine: step 1/1. In terms of biological role, catalyzes a salvage reaction resulting in the formation of AMP, that is energically less costly than de novo synthesis. In Thermosipho melanesiensis (strain DSM 12029 / CIP 104789 / BI429), this protein is Adenine phosphoribosyltransferase.